The sequence spans 409 residues: MARAKFERTKPHVNIGTIGHVDHGKTTLTAAITMTLAAQGKAKARNYEDIDAAPEEKARGITINTAHVEYETDSRHYAHVDCPGHADYVKNMITGAAQMDGGILVVSAADGPMPQTREHILLAKQVGVPNLVVFLNKQDMVDDEELLELVELEVRELLTEYGFDGDNIPIVAGSALQAVEALKANPKIAKGDNEWTDKILALMDEVDAYIPEPEREIDKPFLMAVEDVFSISGRGTVATGRIERGKVKVGETVEIVGIRATSSTTVTGVEMFQKTLEEGLAGDNVGLLLRGVKKEDIERGMVIAKPGSITPHTQFEGEVYVLTKEEGGRHTPFFKNYKPQFYVRTTDVTGSIVDYTSDEGETVEMVMPGDRIKMTVELINPIAIEQGMRFAIREGGRTIGAGVVSKILK.

Residues 10 to 214 (KPHVNIGTIG…EVDAYIPEPE (205 aa)) enclose the tr-type G domain. Positions 19–26 (GHVDHGKT) are G1. GTP is bound at residue 19–26 (GHVDHGKT). Thr-26 provides a ligand contact to Mg(2+). The interval 60–64 (GITIN) is G2. Positions 81–84 (DCPG) are G3. GTP contacts are provided by residues 81–85 (DCPGH) and 136–139 (NKQD). Residues 136 to 139 (NKQD) form a G4 region. Positions 174-176 (SAL) are G5.

This sequence belongs to the TRAFAC class translation factor GTPase superfamily. Classic translation factor GTPase family. EF-Tu/EF-1A subfamily. Monomer.

It localises to the cytoplasm. The enzyme catalyses GTP + H2O = GDP + phosphate + H(+). Functionally, GTP hydrolase that promotes the GTP-dependent binding of aminoacyl-tRNA to the A-site of ribosomes during protein biosynthesis. This chain is Elongation factor Tu, found in Rippkaea orientalis (strain PCC 8801 / RF-1) (Cyanothece sp. (strain PCC 8801)).